The chain runs to 440 residues: Ribulose bisphosphate carboxylase large chain (440 aa).

Position 4 is an N6,N6,N6-trimethyllysine (K4). Residues N113 and T163 each coordinate substrate. The Proton acceptor role is filled by K165. Substrate is bound at residue K167. K191, D193, and E194 together coordinate Mg(2+). An N6-carboxylysine modification is found at K191. The active-site Proton acceptor is H284. The substrate site is built by R285, H317, and S369.

It belongs to the RuBisCO large chain family. Type I subfamily. In terms of assembly, heterohexadecamer of 8 large chains and 8 small chains; disulfide-linked. The disulfide link is formed within the large subunit homodimers. Mg(2+) serves as cofactor. Post-translationally, the disulfide bond which can form in the large chain dimeric partners within the hexadecamer appears to be associated with oxidative stress and protein turnover.

The protein localises to the plastid. Its subcellular location is the chloroplast. It catalyses the reaction 2 (2R)-3-phosphoglycerate + 2 H(+) = D-ribulose 1,5-bisphosphate + CO2 + H2O. It carries out the reaction D-ribulose 1,5-bisphosphate + O2 = 2-phosphoglycolate + (2R)-3-phosphoglycerate + 2 H(+). In terms of biological role, ruBisCO catalyzes two reactions: the carboxylation of D-ribulose 1,5-bisphosphate, the primary event in carbon dioxide fixation, as well as the oxidative fragmentation of the pentose substrate in the photorespiration process. Both reactions occur simultaneously and in competition at the same active site. This Pteris vittata (Chinese ladder brake) protein is Ribulose bisphosphate carboxylase large chain.